The following is a 260-amino-acid chain: uncharacterized protein (260 aa).

An N-terminal signal peptide occupies residues 1 to 22 (MGYLKGFALYISILILIVFIAG). The N-palmitoyl cysteine moiety is linked to residue Cys-23. Cys-23 is lipidated: S-diacylglycerol cysteine.

It belongs to the staphylococcal tandem lipoprotein family.

It localises to the cell membrane. This is an uncharacterized protein from Staphylococcus aureus (strain MSSA476).